A 331-amino-acid chain; its full sequence is MELSRGASAPDPDDVRPLKPCLLRRNHSRDQHGVAASSLEELRSKACELLAIDKSLTPITLVLAEDGTIVDDDDYFLCLPSNTKFVALACNEKWIYNDSDGGTAWVSQESFEADEPDSRAGVKWKNVARQLKEDLSSIILLSEEDLQALIDIPCAELAQELCQSCATVQGLQSTLQQVLDQREEARQSKQLLELYLQALEKEGNILSNQKESKAALSEELDAVDTGVGREMASEVLLRSQILTTLKEKPAPELSLSSQDLESVSKEDPKALAVALSWDIRKAETVQQACTTELALRLQQVQSLHSLRNLSARRSPLPGEPQRPKRAKRDSS.

Methionine 1 is subject to N-acetylmethionine. Positions 17–96 constitute a CIDE-N domain; the sequence is PLKPCLLRRN…ALACNEKWIY (80 aa). The residue at position 243 (threonine 243) is a Phosphothreonine. A disordered region spans residues 306–331; it reads LRNLSARRSPLPGEPQRPKRAKRDSS.

As to quaternary structure, heterodimer of DFFA and DFFB. Caspase-3 cleaves DFF45 at 2 sites to generate an active factor.

The protein resides in the cytoplasm. Functionally, inhibitor of the caspase-activated DNase (DFF40). This Mus musculus (Mouse) protein is DNA fragmentation factor subunit alpha (Dffa).